Reading from the N-terminus, the 433-residue chain is T-box transcription factor T (433 aa).

The segment at residues 49–217 (LWLRFKELTN…YNPFAKAFLD (169 aa)) is a DNA-binding region (T-box).

Monomer. Binds DNA as a monomer.

It localises to the nucleus. In terms of biological role, involved in the transcriptional regulation of genes required for mesoderm formation and differentiation. Binds to a palindromic site (called T site) and activates gene transcription when bound to such a site. The protein is T-box transcription factor T of Gallus gallus (Chicken).